We begin with the raw amino-acid sequence, 209 residues long: Kynurenine formamidase (209 aa).

W20 is a binding site for substrate. 3 residues coordinate Zn(2+): H50, H54, and D56. Catalysis depends on H60, which acts as the Proton donor/acceptor. Zn(2+) contacts are provided by H161 and E173.

The protein belongs to the Cyclase 1 superfamily. KynB family. Homodimer. Zn(2+) is required as a cofactor.

It carries out the reaction N-formyl-L-kynurenine + H2O = L-kynurenine + formate + H(+). It participates in amino-acid degradation; L-tryptophan degradation via kynurenine pathway; L-kynurenine from L-tryptophan: step 2/2. In terms of biological role, catalyzes the hydrolysis of N-formyl-L-kynurenine to L-kynurenine, the second step in the kynurenine pathway of tryptophan degradation. This chain is Kynurenine formamidase, found in Bacillus cereus (strain ATCC 14579 / DSM 31 / CCUG 7414 / JCM 2152 / NBRC 15305 / NCIMB 9373 / NCTC 2599 / NRRL B-3711).